We begin with the raw amino-acid sequence, 219 residues long: Salivary IL-4-inducing protein (219 aa).

Residues 1-19 form the signal peptide; that stretch reads MKYLLTLLMALSLVNLMLT. The tract at residues 19–109 is disordered; the sequence is TRPTPEDDGG…KNDPRETYNK (91 aa). Over residues 30–43 the composition is skewed to low complexity; that stretch reads SEEPQTQETTGETT. Residues 72–107 are compositionally biased toward basic and acidic residues; sequence DDTAKKEDDGESKDGEGSEKSDKEKGEPKNDPRETY.

Salivary gland (at protein level).

Its subcellular location is the secreted. Its function is as follows. Induces expression of IL4 in host skin by diverting host CD4 cells away from Th1 and towards Th2 responsiveness. Induces expression of IL10 in host skin. Down-regulates expression of IL12B, IFN-gamma (IFNG) and TNF-alpha (TNF) in host skin. The chain is Salivary IL-4-inducing protein from Aedes aegypti (Yellowfever mosquito).